The sequence spans 293 residues: Fructose-bisphosphate aldolase (293 aa).

Serine 50 is a D-glyceraldehyde 3-phosphate binding site. Residue aspartate 85 is the Proton donor of the active site. Positions 86, 106, 136, and 178 each coordinate Zn(2+). Glycine 179 lines the dihydroxyacetone phosphate pocket. Residue histidine 208 coordinates Zn(2+). Dihydroxyacetone phosphate contacts are provided by residues glycine 209–serine 211 and asparagine 230–threonine 233.

The protein belongs to the class II fructose-bisphosphate aldolase family. Zn(2+) is required as a cofactor.

The catalysed reaction is beta-D-fructose 1,6-bisphosphate = D-glyceraldehyde 3-phosphate + dihydroxyacetone phosphate. It participates in carbohydrate degradation; glycolysis; D-glyceraldehyde 3-phosphate and glycerone phosphate from D-glucose: step 4/4. Functionally, catalyzes the aldol condensation of dihydroxyacetone phosphate (DHAP or glycerone-phosphate) with glyceraldehyde 3-phosphate (G3P) to form fructose 1,6-bisphosphate (FBP) in gluconeogenesis and the reverse reaction in glycolysis. This Streptococcus pyogenes serotype M1 protein is Fructose-bisphosphate aldolase (fba).